Here is a 222-residue protein sequence, read N- to C-terminus: Leucyl/phenylalanyl-tRNA--protein transferase (222 aa).

This sequence belongs to the L/F-transferase family.

It localises to the cytoplasm. It carries out the reaction N-terminal L-lysyl-[protein] + L-leucyl-tRNA(Leu) = N-terminal L-leucyl-L-lysyl-[protein] + tRNA(Leu) + H(+). The enzyme catalyses N-terminal L-arginyl-[protein] + L-leucyl-tRNA(Leu) = N-terminal L-leucyl-L-arginyl-[protein] + tRNA(Leu) + H(+). The catalysed reaction is L-phenylalanyl-tRNA(Phe) + an N-terminal L-alpha-aminoacyl-[protein] = an N-terminal L-phenylalanyl-L-alpha-aminoacyl-[protein] + tRNA(Phe). Functionally, functions in the N-end rule pathway of protein degradation where it conjugates Leu, Phe and, less efficiently, Met from aminoacyl-tRNAs to the N-termini of proteins containing an N-terminal arginine or lysine. The polypeptide is Leucyl/phenylalanyl-tRNA--protein transferase (Legionella pneumophila (strain Lens)).